The following is a 158-amino-acid chain: MSNVFTHINADGNAHMVDVTEKAITEREARAEAFIEMASTTLEMIMSGSHHKGDVFATARIAGIQAAKKTSDLIPLCHPLMLTKVEVDLEAQPEHNRVRITSLCKLSGKTGVEMEALTAASVAALTIYDMCKAVQKDMVISQVRLLEKRGGKSGHFKV.

Residues 76–78 and 114–115 contribute to the substrate site; these read LCH and ME. The active site involves Asp129.

This sequence belongs to the MoaC family. As to quaternary structure, homohexamer; trimer of dimers.

It catalyses the reaction (8S)-3',8-cyclo-7,8-dihydroguanosine 5'-triphosphate = cyclic pyranopterin phosphate + diphosphate. Its pathway is cofactor biosynthesis; molybdopterin biosynthesis. Catalyzes the conversion of (8S)-3',8-cyclo-7,8-dihydroguanosine 5'-triphosphate to cyclic pyranopterin monophosphate (cPMP). The sequence is that of Cyclic pyranopterin monophosphate synthase from Shewanella baltica (strain OS223).